A 354-amino-acid chain; its full sequence is CREB/ATF bZIP transcription factor (354 aa).

3 disordered regions span residues 1 to 95 (MRHS…PGEE), 113 to 156 (PRQP…AAEM), and 171 to 214 (GGCS…RKAA). Ser-50 is subject to Phosphoserine. The segment covering 121–132 (DPGLSSPGPLSS) has biased composition (low complexity). Gly residues-rich tracts occupy residues 133 to 143 (SGGGSDSGGLW) and 190 to 199 (PGGGGGGGSG). One can recognise a bZIP domain in the interval 204-267 (QAATKSPRKA…QALQEESRYL (64 aa)). The span at 205–214 (AATKSPRKAA) shows a compositional bias: low complexity. Residues 219–226 (RLNRLKKK) form a basic motif region. The leucine-zipper stretch occupies residues 232-267 (LESRVRGLAAENQELRAENRELGKRVQALQEESRYL). Residues 303 to 306 (DHDY) carry the HCFC1-binding motif (HBM) motif.

Belongs to the bZIP family. ATF subfamily. As to quaternary structure, interacts with HCFC1; the interaction inhibits CREB3 transcriptional activity. Interacts with CREB3; the interaction occurs only in combination with HCFC1. In terms of tissue distribution, in adults, expressed most abundantly in heart, liver and skeletal muscle, moderately abundant in kidney and pancreas, and barely detectable in lung. In fetal tissues, expressed most abundantly in kidney and very low amounts in heart, lung and liver.

It localises to the nucleus. Strongly activates transcription when bound to HCFC1. Suppresses the expression of HSV proteins in cells infected with the virus in a HCFC1-dependent manner. Also suppresses the HCFC1-dependent transcriptional activation by CREB3 and reduces the amount of CREB3 in the cell. Able to down-regulate expression of some cellular genes in CREBZF-expressing cells. This Homo sapiens (Human) protein is CREB/ATF bZIP transcription factor (CREBZF).